The primary structure comprises 784 residues: LPS-assembly protein LptD (784 aa).

The N-terminal stretch at 1 to 24 (MKKRIPTLLATMIATALYSQQGLA) is a signal peptide. 2 disulfides stabilise this stretch: cysteine 31/cysteine 724 and cysteine 173/cysteine 725.

It belongs to the LptD family. In terms of assembly, component of the lipopolysaccharide transport and assembly complex. Interacts with LptE and LptA. In terms of processing, contains two intramolecular disulfide bonds.

The protein localises to the cell outer membrane. In terms of biological role, together with LptE, is involved in the assembly of lipopolysaccharide (LPS) at the surface of the outer membrane. The sequence is that of LPS-assembly protein LptD from Shigella flexneri.